A 222-amino-acid polypeptide reads, in one-letter code: Protein-L-isoaspartate O-methyltransferase (222 aa).

Residue serine 68 is part of the active site.

This sequence belongs to the methyltransferase superfamily. L-isoaspartyl/D-aspartyl protein methyltransferase family.

It localises to the cytoplasm. The enzyme catalyses [protein]-L-isoaspartate + S-adenosyl-L-methionine = [protein]-L-isoaspartate alpha-methyl ester + S-adenosyl-L-homocysteine. Catalyzes the methyl esterification of L-isoaspartyl residues in peptides and proteins that result from spontaneous decomposition of normal L-aspartyl and L-asparaginyl residues. It plays a role in the repair and/or degradation of damaged proteins. The polypeptide is Protein-L-isoaspartate O-methyltransferase (Koribacter versatilis (strain Ellin345)).